The sequence spans 216 residues: Hexitol phosphatase A (216 aa).

Residue aspartate 9 is the Nucleophile of the active site. A divalent metal cation-binding residues include aspartate 9 and aspartate 11. Substrate-binding positions include aspartate 9–aspartate 11, threonine 106–serine 107, and lysine 138. The Proton donor role is filled by aspartate 11. Aspartate 163 serves as a coordination point for a divalent metal cation.

Belongs to the HAD-like hydrolase superfamily. CbbY/CbbZ/Gph/YieH family. It depends on Mg(2+) as a cofactor. Mn(2+) is required as a cofactor. The cofactor is Co(2+).

It catalyses the reaction sugar phosphate + H2O = sugar + phosphate.. It carries out the reaction D-mannitol 1-phosphate + H2O = D-mannitol + phosphate. The enzyme catalyses D-sorbitol 6-phosphate + H2O = D-sorbitol + phosphate. Sugar-phosphate phosphohydrolase that appears to contribute to butanol tolerance. Catalyzes the dephosphorylation of D-mannitol 1-phosphate and D-sorbitol 6-phosphate. Is also able to dephosphorylate other sugar phosphates in vitro including ribose-5-phosphate (Rib5P), 2-deoxyribose-5-phosphate, fructose-1-phosphate (Fru1P), fructose-6-phosphate (Fru6P), and glucose-6-phosphate (Glu6P). Selectively hydrolyzes beta-D-glucose-1-phosphate (bGlu1P) and has no activity with the alpha form. In Escherichia coli (strain K12), this protein is Hexitol phosphatase A.